The chain runs to 131 residues: Profilin-2 (131 aa).

It belongs to the profilin family. In terms of assembly, occurs in many kinds of cells as a complex with monomeric actin in a 1:1 ratio. In terms of tissue distribution, expressed in vascular bundles of roots, hypocotyls, cotyledons, leaves, sepals, petals, stamen filaments and stalks of developing seeds. Expressed in leaf epidermal cells, trichomes and stem epidermal cells. Detected in phloem exudates (at protein level).

The protein localises to the cytoplasm. Its subcellular location is the cytoskeleton. The protein resides in the endoplasmic reticulum. It localises to the cytosol. It is found in the nucleus. In terms of biological role, binds to actin monomers and regulates the organization of the actin cytoskeleton. At high concentrations, profilin prevents the polymerization of actin, whereas it enhances it at low concentrations. At low concentrations, associates with the poly-proline motif of formins to enhance actin filament elongation rate. Binds G-actin and poly-L-proline with low affinity in vitro. Binds ACT1, ACT7 and ACT11 and inhibits actin polymerization. May be involved in the cross-talk between vesicular trafficking and the actin cytoskeleton. Inhibits cell growth of various pathogenic fungal strains. May play a role as antifungal proteins in the defense system against fungal pathogen attacks. This is Profilin-2 from Arabidopsis thaliana (Mouse-ear cress).